A 207-amino-acid polypeptide reads, in one-letter code: dTTP/UTP pyrophosphatase (207 aa).

The active-site Proton acceptor is the Asp86.

The protein belongs to the Maf family. YhdE subfamily. It depends on a divalent metal cation as a cofactor.

Its subcellular location is the cytoplasm. It catalyses the reaction dTTP + H2O = dTMP + diphosphate + H(+). The catalysed reaction is UTP + H2O = UMP + diphosphate + H(+). In terms of biological role, nucleoside triphosphate pyrophosphatase that hydrolyzes dTTP and UTP. May have a dual role in cell division arrest and in preventing the incorporation of modified nucleotides into cellular nucleic acids. This is dTTP/UTP pyrophosphatase from Nitrosospira multiformis (strain ATCC 25196 / NCIMB 11849 / C 71).